A 211-amino-acid chain; its full sequence is FMN-dependent NADH:quinone oxidoreductase (211 aa).

An FMN-binding site is contributed by 17-19 (SYS).

Belongs to the azoreductase type 1 family. As to quaternary structure, homodimer. The cofactor is FMN.

The catalysed reaction is 2 a quinone + NADH + H(+) = 2 a 1,4-benzosemiquinone + NAD(+). It carries out the reaction N,N-dimethyl-1,4-phenylenediamine + anthranilate + 2 NAD(+) = 2-(4-dimethylaminophenyl)diazenylbenzoate + 2 NADH + 2 H(+). Quinone reductase that provides resistance to thiol-specific stress caused by electrophilic quinones. In terms of biological role, also exhibits azoreductase activity. Catalyzes the reductive cleavage of the azo bond in aromatic azo compounds to the corresponding amines. In Bacillus velezensis (strain DSM 23117 / BGSC 10A6 / LMG 26770 / FZB42) (Bacillus amyloliquefaciens subsp. plantarum), this protein is FMN-dependent NADH:quinone oxidoreductase.